The chain runs to 539 residues: Chaperonin GroEL (539 aa).

Residues 29–32, 86–90, Gly-413, 476–478, and Asp-492 contribute to the ATP site; these read TLGP, DGTTT, and NAA.

It belongs to the chaperonin (HSP60) family. As to quaternary structure, forms a cylinder of 14 subunits composed of two heptameric rings stacked back-to-back. Interacts with the co-chaperonin GroES.

Its subcellular location is the cytoplasm. It catalyses the reaction ATP + H2O + a folded polypeptide = ADP + phosphate + an unfolded polypeptide.. Functionally, together with its co-chaperonin GroES, plays an essential role in assisting protein folding. The GroEL-GroES system forms a nano-cage that allows encapsulation of the non-native substrate proteins and provides a physical environment optimized to promote and accelerate protein folding. In Macrococcus caseolyticus (strain JCSC5402) (Macrococcoides caseolyticum), this protein is Chaperonin GroEL.